A 553-amino-acid polypeptide reads, in one-letter code: Glycerol-3-phosphate dehydrogenase (553 aa).

13-41 (DLIVIGGGINGVGTARDGALRGLKTLLIE) contributes to the FAD binding site.

The protein belongs to the FAD-dependent glycerol-3-phosphate dehydrogenase family. FAD serves as cofactor.

The protein resides in the cytoplasm. The enzyme catalyses a quinone + sn-glycerol 3-phosphate = dihydroxyacetone phosphate + a quinol. The sequence is that of Glycerol-3-phosphate dehydrogenase (glpD) from Synechocystis sp. (strain ATCC 27184 / PCC 6803 / Kazusa).